Here is a 633-residue protein sequence, read N- to C-terminus: RpoH suppressor (633 aa).

Positions 11-410 constitute a PNPLA domain; the sequence is LVMKGGITSG…SSNFPIHLFD (400 aa). 3 helical membrane passes run 38–58, 133–153, and 159–179; these read NIGG…AAVG, IAPV…YAVG, and IAAA…FAVL. Residues 41-45 carry the GXSXG motif; that stretch reads GTSAG. Ser-43 functions as the Nucleophile in the catalytic mechanism. The interval 342-380 is disordered; sequence ARRESLPGSDGENEAEDTTSDEDEQKTVLDSTEALTTGG. The segment covering 352-365 has biased composition (acidic residues); it reads GENEAEDTTSDEDE. Catalysis depends on Asp-397, which acts as the Proton acceptor. The DGA/G signature appears at 397 to 399; that stretch reads DGG. Positions 605–624 are disordered; the sequence is EGEKWSGEGPDLTKTAPRPL.

It is found in the cell membrane. Functionally, this protein is non-essential for R.meliloti growth, but induces a heat-shock response in temperature-sensitive E.coli K165 by elevating levels of sigma 32 (mechanism unknown). This Rhizobium meliloti (strain 1021) (Ensifer meliloti) protein is RpoH suppressor (suhR).